A 321-amino-acid polypeptide reads, in one-letter code: Pirin-like protein 2 (321 aa).

Fe cation is bound by residues H88, H90, H132, and E134.

The protein belongs to the pirin family. Interacts with RD21A, RD21B and XCP2.

The protein resides in the cytoplasm. It localises to the cytosol. Its subcellular location is the nucleus. In terms of biological role, involved in susceptibility to the bacterial plant pathogen Ralstonia solanacearum. Stabilizes the xylem cysteine protease XCP2 by blocking its autolysis. This is Pirin-like protein 2 from Arabidopsis thaliana (Mouse-ear cress).